The chain runs to 136 residues: Probable intron-encoded DNA endonuclease 3 (136 aa).

The protein belongs to the LAGLIDADG endonuclease family.

Its subcellular location is the mitochondrion. Mitochondrial DNA endonuclease involved in intron homing. The sequence is that of Probable intron-encoded DNA endonuclease 3 (hegI3) from Mycosarcoma maydis (Corn smut fungus).